A 230-amino-acid polypeptide reads, in one-letter code: Flagellar L-ring protein (230 aa).

The N-terminal stretch at 1–15 is a signal peptide; sequence MSRLPSLSRPCLAIA. The N-palmitoyl cysteine moiety is linked to residue cysteine 16. The S-diacylglycerol cysteine moiety is linked to residue cysteine 16.

It belongs to the FlgH family. In terms of assembly, the basal body constitutes a major portion of the flagellar organelle and consists of four rings (L,P,S, and M) mounted on a central rod.

It is found in the cell outer membrane. It localises to the bacterial flagellum basal body. Assembles around the rod to form the L-ring and probably protects the motor/basal body from shearing forces during rotation. This chain is Flagellar L-ring protein, found in Xanthomonas axonopodis pv. citri (strain 306).